The chain runs to 30 residues: PKIRKVLVANRGEIAIRVMRTXKELGIATV.

Positions 1-30 constitute a Biotin carboxylation domain; the sequence is PKIRKVLVANRGEIAIRVMRTXKELGIATV.

As to quaternary structure, dodecamer composed of six biotin-containing alpha subunits and six beta subunits. Requires Mg(2+) as cofactor. Mn(2+) is required as a cofactor. It depends on biotin as a cofactor.

The catalysed reaction is propanoyl-CoA + hydrogencarbonate + ATP = (S)-methylmalonyl-CoA + ADP + phosphate + H(+). Its pathway is metabolic intermediate metabolism; propanoyl-CoA degradation; succinyl-CoA from propanoyl-CoA: step 1/3. In terms of biological role, this is one of the 2 subunits of the biotin-dependent propionyl-CoA carboxylase (PCC), the enzyme catalyzing the carboxylation of propionyl-CoA/propanoyl-CoA to D-methylmalonyl-CoA/(S)-methylmalonyl-CoA. Within the holoenzyme, the alpha subunit catalyzes the ATP-dependent carboxylation of the biotin carried by the biotin carboxyl carrier (BCC) domain, while the beta subunit then transfers the carboxyl group from carboxylated biotin to propionyl-CoA. Propionyl-CoA carboxylase also carboxylates acetyl-CoA, butyryl-CoA and succinyl-CoA. This Myxococcus xanthus protein is Propionyl-CoA carboxylase alpha chain.